Consider the following 129-residue polypeptide: Beta-galactoside-binding lectin (129 aa).

Position 1 is an N-acetylserine (serine 1). The region spanning 4-129 (GVVDERMSFK…EARIYSIEIK (126 aa)) is the Galectin domain. An a beta-D-galactoside-binding site is contributed by 69-75 (WGTEQRE).

In terms of biological role, this protein binds beta-galactoside. Its physiological function is not yet known. This is Beta-galactoside-binding lectin from Electrophorus electricus (Electric eel).